The chain runs to 135 residues: Class I hydrophobin 2 (135 aa).

The signal sequence occupies residues 1–20; that stretch reads MFARLTSTLFALAAVSAVFA. 4 disulfide bridges follow: cysteine 29/cysteine 114, cysteine 36/cysteine 107, cysteine 37/cysteine 73, and cysteine 115/cysteine 128. N-linked (GlcNAc...) asparagine glycosylation is found at asparagine 117 and asparagine 132.

It belongs to the fungal hydrophobin family. As to quaternary structure, self-assembles to form functional amyloid fibrils called rodlets. Self-assembly into fibrillar rodlets occurs spontaneously at hydrophobic:hydrophilic interfaces and the rodlets further associate laterally to form amphipathic monolayers.

It localises to the secreted. Its subcellular location is the cell wall. Aerial growth, conidiation, and dispersal of filamentous fungi in the environment rely upon a capability of their secreting small amphipathic proteins called hydrophobins (HPBs) with low sequence identity. Class I can self-assemble into an outermost layer of rodlet bundles on aerial cell surfaces, conferring cellular hydrophobicity that supports fungal growth, development and dispersal; whereas Class II form highly ordered films at water-air interfaces through intermolecular interactions but contribute nothing to the rodlet structure. The chain is Class I hydrophobin 2 from Coprinopsis cinerea (strain Okayama-7 / 130 / ATCC MYA-4618 / FGSC 9003) (Inky cap fungus).